The following is a 200-amino-acid chain: ATP synthase subunit delta', mitochondrial (200 aa).

Residues 1 to 21 (MFRHSSRLLARATTMGWRRPF) constitute a mitochondrion transit peptide.

Belongs to the ATPase epsilon chain family. In terms of assembly, F-type ATPases have 2 components, CF(1) - the catalytic core - and CF(0) - the membrane proton channel. CF(1) has five subunits: alpha(3), beta(3), gamma(1), delta(1), epsilon(1). CF(0) has three main subunits: a, b and c.

The protein localises to the mitochondrion. The protein resides in the mitochondrion inner membrane. In terms of biological role, mitochondrial membrane ATP synthase (F(1)F(0) ATP synthase or Complex V) produces ATP from ADP in the presence of a proton gradient across the membrane which is generated by electron transport complexes of the respiratory chain. F-type ATPases consist of two structural domains, F(1) - containing the extramembraneous catalytic core, and F(0) - containing the membrane proton channel, linked together by a central stalk and a peripheral stalk. During catalysis, ATP turnover in the catalytic domain of F(1) is coupled via a rotary mechanism of the central stalk subunits to proton translocation. Part of the complex F(1) domain and of the central stalk which is part of the complex rotary element. Rotation of the central stalk against the surrounding alpha(3)beta(3) subunits leads to hydrolysis of ATP in three separate catalytic sites on the beta subunits. This chain is ATP synthase subunit delta', mitochondrial, found in Ipomoea batatas (Sweet potato).